The following is a 392-amino-acid chain: Phosphoglycerate kinase (392 aa).

Residues 19–21 (DYN), R34, 57–60 (HLGR), R116, and R149 each bind substrate. ATP-binding positions include K199, E321, and 347–350 (GGDS).

It belongs to the phosphoglycerate kinase family. As to quaternary structure, monomer.

The protein localises to the cytoplasm. It catalyses the reaction (2R)-3-phosphoglycerate + ATP = (2R)-3-phospho-glyceroyl phosphate + ADP. Its pathway is carbohydrate degradation; glycolysis; pyruvate from D-glyceraldehyde 3-phosphate: step 2/5. The polypeptide is Phosphoglycerate kinase (Thermomicrobium roseum (strain ATCC 27502 / DSM 5159 / P-2)).